A 414-amino-acid polypeptide reads, in one-letter code: MLLITEILIINFFAATDLVQLYIVYEASLIPMVIMIGVWGSRTEKKIAAFQILIYTLIGSIFMLMSIGLLYSTLGTTDYILIREYIEVLPENVRKIIFIGFFIGFAVKIPIAPLHLWLLRAHVEAPTAGSVLLAGILLKLGGYGYIRYNIGLFPDLCEYYFPIIGGICLISILYTGIATLTQLDVKRIVAYSSISHMNVIVLGLFSGVLQGLEGGIILMIGHGIVSGGLFLCIGVIYDRCKTRILYAYNNLVHMMPIMAILFFLLVLGNIAFPITSNFVGELLIFIGLIKKNIIIAFFSALSMIITAIYSFWLYNRIFFVNEIITREANEGIQMEVNKMTIKEGGINKKVTEGEIIGELEYPQYIKKESMKYSDVNIFEFVSIGLMVILMLIVGMKPSLVEGYIAINCLELISK.

Transmembrane regions (helical) follow at residues Leu18–Val38, Ile47–Ile67, Ile96–Leu116, Pro126–Ile146, Tyr160–Leu180, Ile188–Val208, Ile216–Ile236, Met254–Ile274, Ile293–Leu313, and Val375–Met395.

This sequence belongs to the complex I subunit 4 family.

The protein resides in the mitochondrion membrane. The enzyme catalyses a ubiquinone + NADH + 5 H(+)(in) = a ubiquinol + NAD(+) + 4 H(+)(out). Its function is as follows. Core subunit of the mitochondrial membrane respiratory chain NADH dehydrogenase (Complex I) that is believed to belong to the minimal assembly required for catalysis. Complex I functions in the transfer of electrons from NADH to the respiratory chain. The immediate electron acceptor for the enzyme is believed to be ubiquinone. The polypeptide is NADH-ubiquinone oxidoreductase chain 4 (nad4) (Dictyostelium citrinum (Slime mold)).